Consider the following 333-residue polypeptide: Protoheme IX farnesyltransferase (333 aa).

The next 7 membrane-spanning stretches (helical) occupy residues 64–84 (LICTLGGGALAAAAAGALNCL), 110–130 (TVFLAAVSCTLAASMLLISGV), 133–153 (LAAGLTLLGLCSYVILYTVIL), 161–181 (IVFGGVAGAIPPLVGASAATG), 189–209 (WLFGLVMLWTPAHFWALAILL), 246–266 (IMGVFALPEGGLLYGIMLLPF), and 287–307 (AKSLFRWSILYMFGICLLLLI).

It belongs to the UbiA prenyltransferase family. Protoheme IX farnesyltransferase subfamily.

It is found in the cell inner membrane. It catalyses the reaction heme b + (2E,6E)-farnesyl diphosphate + H2O = Fe(II)-heme o + diphosphate. The protein operates within porphyrin-containing compound metabolism; heme O biosynthesis; heme O from protoheme: step 1/1. Converts heme B (protoheme IX) to heme O by substitution of the vinyl group on carbon 2 of heme B porphyrin ring with a hydroxyethyl farnesyl side group. In Prochlorococcus marinus (strain MIT 9312), this protein is Protoheme IX farnesyltransferase.